Here is a 61-residue protein sequence, read N- to C-terminus: Probable tautomerase BA_5626/GBAA_5626/BAS5226 (61 aa).

P2 functions as the Proton acceptor; via imino nitrogen in the catalytic mechanism.

It belongs to the 4-oxalocrotonate tautomerase family.

This Bacillus anthracis protein is Probable tautomerase BA_5626/GBAA_5626/BAS5226.